A 630-amino-acid polypeptide reads, in one-letter code: MPFHNPFIKDGQIKFPDGSSIVAHVERWAKVRGDKLAYRFLDFSTERDGVPRDLTWAQFSARNRAVAARLQQVTQPGDRVAILCPQNLDYLVAFFGALYAGRIAVPLFDPSEPGHVGRLHAVLDNCHPSAILTTTEAAEGVRKFFRTRPANQRPRVIAVDAVPDDVASTWVNPDEPDETTIAYLQYTSGSTRIPTGVQITHLNLATNVVQVIEALEGEEGDRGLSWLPFFHDMGLITALLAPMIGHYFTFMTPAAFVRRPERWIRELARKEGDTGGTISVAPNFAFDHAAARGVPKPGSPPLDLSNVKAVLNGSEPISAATVRRFNEAFGPFGFPPKAIKPSYGLAEATLFVSTTPSAEEPKIITVDRDQLNSGRIVEVDADSPKAVAQASAGKVGIAEWAVIVDAESATELPDGQVGEIWISGQNMGTGYWGKPEESVATFQNILKSRTNPSHAEGATDDATWVRTGDYGAFYDGDLYITGRVKDLVIIDGRNHYPQDLEYSAQEASKAIRTGYVAAFSVPANQLPDEVFENAHSGIKRDPDDTSEQLVIVAERAPGAHKLDIGPITDDIRAAIAVRHGVTVRDVLLTAAGAIPRTSSGKIGRRACRAAYLDGSLRAGKVANDFPDATD.

Residues 187 to 192 (TSGSTR), serine 342, alanine 346, aspartate 469, and arginine 483 contribute to the ATP site.

This sequence belongs to the ATP-dependent AMP-binding enzyme family. As to quaternary structure, monomer.

It catalyses the reaction a long-chain fatty acid + holo-[ACP] + ATP = a long-chain fatty acyl-[ACP] + AMP + diphosphate. The catalysed reaction is decanoate + ATP + H(+) = decanoyl-AMP + diphosphate. The enzyme catalyses dodecanoate + ATP + H(+) = dodecanoyl-AMP + diphosphate. It carries out the reaction tetradecanoate + ATP + H(+) = tetradecanoyl-AMP + diphosphate. It participates in lipid metabolism; mycolic acid biosynthesis. The acyl-AMP ligase activity is inhibited by the alkylphosphate ester of AMP, adenosine 50-dodecylphosphate (AMPC12). Also inhibited by eicosyl-AMP (AMPC20). Its function is as follows. Involved in the biosynthesis of mycolic acids. Catalyzes the activation of long-chain fatty acids as acyl-adenylates (acyl-AMP), which are then transferred to the phosphopantetheine arm of the polyketide synthase Pks13 for further chain extension. Can use decanoate (C10), dodecanoate (C12) and tetradecanoate (C14). This is Long-chain-fatty-acid--AMP ligase FadD32 from Mycolicibacterium smegmatis (strain ATCC 700084 / mc(2)155) (Mycobacterium smegmatis).